Reading from the N-terminus, the 206-residue chain is Large ribosomal subunit protein uL4 (206 aa).

A disordered region spans residues Arg-44–Thr-77. Residues Val-56–Gly-70 are compositionally biased toward basic residues.

It belongs to the universal ribosomal protein uL4 family. As to quaternary structure, part of the 50S ribosomal subunit.

One of the primary rRNA binding proteins, this protein initially binds near the 5'-end of the 23S rRNA. It is important during the early stages of 50S assembly. It makes multiple contacts with different domains of the 23S rRNA in the assembled 50S subunit and ribosome. Its function is as follows. Forms part of the polypeptide exit tunnel. The protein is Large ribosomal subunit protein uL4 of Methylibium petroleiphilum (strain ATCC BAA-1232 / LMG 22953 / PM1).